The following is a 1757-amino-acid chain: Serine/threonine-protein kinase WNK3 (1757 aa).

A disordered region spans residues 1 to 25; sequence MATDSGEPASTEDSEKPDGVSFENR. Serine 62 carries the post-translational modification Phosphoserine. The span at 66-82 shows a compositional bias: basic and acidic residues; the sequence is TEDDKVAESSRRDERKA. The disordered stretch occupies residues 66–85; the sequence is TEDDKVAESSRRDERKAATN. One can recognise a Protein kinase domain in the interval 146–404; the sequence is LKFDIELGRG…IKDLLNHAFF (259 aa). ATP-binding positions include 226-229 and lysine 276; that span reads TELM. Catalysis depends on aspartate 293, which acts as the Proton acceptor. A phosphoserine; by autocatalysis mark is found at serine 303 and serine 307. An interaction with KLHL3 region spans residues 536 to 546; sequence EYEETEVDQHV. Threonine 540 carries the phosphothreonine modification. Composition is skewed to polar residues over residues 551–570, 578–604, and 674–689; these read LQGK…SSEP, SDTS…KLTQ, and SVKE…SGNG. Disordered regions lie at residues 551–604 and 674–705; these read LQGK…KLTQ and SVKE…PRPE. Serine 1039 is subject to Phosphoserine. Residues 1404–1422 show a composition bias toward polar residues; sequence VATEKNVTSTTEVSVQSGS. Disordered stretches follow at residues 1404 to 1440, 1479 to 1498, and 1536 to 1574; these read VATE…QTCT, SLFY…EIED, and ATKD…MTHS. Over residues 1479–1491 the composition is skewed to low complexity; that stretch reads SLFYSPSSPMSSD. 2 positions are modified to phosphoserine: serine 1550 and serine 1553. Positions 1555–1566 are enriched in basic residues; it reads RRPRSFKSKLRS. Phosphoserine is present on serine 1595. Disordered regions lie at residues 1621 to 1650 and 1734 to 1757; these read HFPS…CEST and PGMN…PGPK. Positions 1624–1637 are enriched in low complexity; that stretch reads SKPSLNQLKQSQQK. Residues 1641 to 1650 show a composition bias toward polar residues; that stretch reads ENWNKSCEST. Residues 1742–1757 are compositionally biased toward pro residues; that stretch reads PAPPVQNPASIPPGPK.

The protein belongs to the protein kinase superfamily. Ser/Thr protein kinase family. WNK subfamily. Interacts with WNK1 and WNK4. It depends on Mg(2+) as a cofactor. Post-translationally, autophosphorylated at Ser-303 and Ser-307, promoting its activity. Phosphorylation at Thr-540 prevents interaction with KLHL3 and subsequent ubiquitination and degradation by the BCR(KLHL3) complex. Ubiquitinated by the BCR(KLHL2) complex, leading to its degradation. Ubiquitinated by the BCR(KLHL3) complex, leading to its degradation. In terms of tissue distribution, expressed in pancreatic duct.

It localises to the cytoplasm. The enzyme catalyses L-seryl-[protein] + ATP = O-phospho-L-seryl-[protein] + ADP + H(+). It catalyses the reaction L-threonyl-[protein] + ATP = O-phospho-L-threonyl-[protein] + ADP + H(+). With respect to regulation, activated in response to hyperosmotic stress: cell shrinkage promotes formation of a membraneless compartment that concentrates WNK3 with its substrates, OXSR1/OSR1 and STK39/SPAK. Activation requires autophosphorylation of Ser-307 and, to a lower extent, Ser-303. Autophosphorylation and subsequent activation is inhibited by increases in intracellular ionic strength: Cl(-) potently inhibits WNK3 kinase activity via direct binding. Also inhibited by K(+) ions. Kinase activity is inhibited by WNK4. Serine/threonine-protein kinase component of the WNK3-SPAK/OSR1 kinase cascade, which plays an important role in the regulation of electrolyte homeostasis and regulatory volume increase in response to hyperosmotic stress. WNK3 mediates regulatory volume increase in response to hyperosmotic stress by acting as a molecular crowding sensor, which senses cell shrinkage and mediates formation of a membraneless compartment by undergoing liquid-liquid phase separation. The membraneless compartment concentrates WNK3 with its substrates, OXSR1/OSR1 and STK39/SPAK, promoting WNK3-dependent phosphorylation and activation of downstream kinases OXSR1/OSR1 and STK39/SPAK. Following activation, OXSR1/OSR1 and STK39/SPAK catalyze phosphorylation of ion cotransporters SLC12A1/NKCC2, SLC12A2/NKCC1, SLC12A3/NCC, SLC12A4/KCC1, SLC12A5/KCC2 or SLC12A6/KCC3, regulating their activity. Phosphorylation of Na-K-Cl cotransporters SLC12A2/NKCC1 and SLC12A2/NKCC1 promote their activation and ion influx; simultaneously, phosphorylation of K-Cl cotransporters SLC12A4/KCC1, SLC12A5/KCC2 and SLC12A6/KCC3 inhibits its activity, blocking ion efflux. Phosphorylates WNK4, possibly regulating the activity of SLC12A3/NCC. May also phosphorylate NEDD4L. Also acts as a scaffold protein independently of its protein kinase activity: negatively regulates cell membrane localization of various transporters and channels, such as KCNJ1 and SLC26A9. Increases Ca(2+) influx mediated by TRPV5 and TRPV6 by enhancing their membrane expression level via a kinase-dependent pathway. In Mus musculus (Mouse), this protein is Serine/threonine-protein kinase WNK3.